Consider the following 303-residue polypeptide: UDP-3-O-acyl-N-acetylglucosamine deacetylase (303 aa).

The Zn(2+) site is built by His78, His237, and Asp241. The active-site Proton donor is the His264.

This sequence belongs to the LpxC family. Requires Zn(2+) as cofactor.

The catalysed reaction is a UDP-3-O-[(3R)-3-hydroxyacyl]-N-acetyl-alpha-D-glucosamine + H2O = a UDP-3-O-[(3R)-3-hydroxyacyl]-alpha-D-glucosamine + acetate. The protein operates within glycolipid biosynthesis; lipid IV(A) biosynthesis; lipid IV(A) from (3R)-3-hydroxytetradecanoyl-[acyl-carrier-protein] and UDP-N-acetyl-alpha-D-glucosamine: step 2/6. Its function is as follows. Catalyzes the hydrolysis of UDP-3-O-myristoyl-N-acetylglucosamine to form UDP-3-O-myristoylglucosamine and acetate, the committed step in lipid A biosynthesis. The protein is UDP-3-O-acyl-N-acetylglucosamine deacetylase of Pseudomonas putida (strain ATCC 700007 / DSM 6899 / JCM 31910 / BCRC 17059 / LMG 24140 / F1).